The sequence spans 838 residues: Transient receptor potential cation channel subfamily V member 1 (838 aa).

Disordered regions lie at residues 1–63 (MEQR…PLDC) and 86–109 (RPGD…EKPP). Residues 1–432 (MEQRASLDSE…QDKWDRFVKR (432 aa)) lie on the Cytoplasmic side of the membrane. The ANK 1 repeat unit spans residues 110-138 (RLYDRRSIFDAVAQSNCQELESLLPFLQR). Arg-115 is a binding site for ATP. At Ser-116 the chain carries Phosphoserine; by PKA and PKD. Residue Thr-144 is modified to Phosphothreonine; by PKA; in vitro. An ANK 2 repeat occupies 153–185 (TGKTCLLKAMLNLHNGQNDTIALLLDVARKTDS). Residues Lys-155, Lys-160, Asn-164, 199 to 202 (YKGQ), and 210 to 211 (ER) contribute to the ATP site. ANK repeat units follow at residues 203–228 (TALH…ADVQ), 249–276 (ELPL…QPAD), 285–321 (NTVL…KLHP), and 335–358 (TPLA…REIH). Thr-370 carries the post-translational modification Phosphothreonine; by PKA; in vitro. The stretch at 393–415 (NSVLEVIAYSSSETPNRHDMLLV) is one ANK 7 repeat. A helical transmembrane segment spans residues 433–453 (IFYFNFFVYCLYMIIFTAAAY). The Extracellular segment spans residues 454–471 (YRPVEGLPPYKLKNTVGD). A helical transmembrane segment spans residues 472 to 497 (YFRVTGEILSVSGGVYFFFRGIQYFL). Residues 498 to 510 (QRRPSLKSLFVDS) lie on the Cytoplasmic side of the membrane. At Ser-502 the chain carries Phosphoserine; by PKC/PRKCE. Resiniferatoxin is bound at residue 511–512 (YS). A helical membrane pass occupies residues 511-531 (YSEILFFVQSLFMLVSVVLYF). The Extracellular portion of the chain corresponds to 532 to 535 (SQRK). A helical membrane pass occupies residues 536–556 (EYVASMVFSLAMGWTNMLYYT). Resiniferatoxin contacts are provided by Thr-550 and Arg-557. Over 557–571 (RGFQQMGIYAVMIEK) the chain is Cytoplasmic. The chain crosses the membrane as a helical span at residues 572–599 (MILRDLCRFMFVYLVFLFGFSTAVVTLI). Topologically, residues 600–626 (EDGKNNSLPMESTPHKCRGSACKPGNS) are extracellular. Asn-604 is a glycosylation site (N-linked (GlcNAc...) asparagine). Residues 627–649 (YNSLYSTCLELFKFTIGMGDLEF) constitute an intramembrane region (pore-forming). Gly-643 provides a ligand contact to Na(+). The Selectivity filter motif lies at 643–646 (GMGD). Residue Asp-646 coordinates Ca(2+). Residues 650–657 (TENYDFKA) lie on the Extracellular side of the membrane. The helical transmembrane segment at 658–686 (VFIILLLAYVILTYILLLNMLIALMGETV) threads the bilayer. The AD stretch occupies residues 684–712 (ETVNKIAQESKNIWKLQRAITILDTEKSF). The Cytoplasmic segment spans residues 687–838 (NKIAQESKNI…FKDSMVPGEK (152 aa)). Phosphothreonine is present on Thr-704. An interaction with calmodulin region spans residues 767-801 (EGVKRTLSFSLRSGRVSGRNWKNFALVPLLRDAST). At Ser-774 the chain carries Phosphoserine; by PKA; in vitro. A required for PIP2-mediated channel inhibition region spans residues 777-792 (LRSGRVSGRNWKNFAL). Ser-800 carries the post-translational modification Phosphoserine; by PKC/PRKCE and PKC/PRKCZ. Ser-820 bears the Phosphoserine; by PKA; in vitro mark.

It belongs to the transient receptor (TC 1.A.4) family. TrpV subfamily. TRPV1 sub-subfamily. Homotetramer. Interacts with PIRT. May also form a heteromeric channel with TRPV3. Interacts with CALM, PRKCM and CSK. Interacts with PRKCG and NTRK1, probably by forming a trimeric complex. Interacts with the Scolopendra mutilans RhTx toxin. Interacts with the spider Tau-theraphotoxin-Hs1a. Interacts with TMEM100. Interacts with PACS2. Phosphorylation by PKA reverses capsaicin-induced dephosphorylation at multiple sites, probably including Ser-116 as a major phosphorylation site. Phosphorylation by CAMKII seems to regulate binding to vanilloids. Phosphorylated and modulated by PRKCE, PRKCM and probably PRKCZ. Dephosphorylation by calcineurin seems to lead to receptor desensitization and phosphorylation by CAMKII recovers activity. Predominantly expressed in trigeminal and dorsal root sensory ganglia. Expressed also in hippocampus, cortex, cerebellum, olfactory bulb, mesencephalon and hindbrain. High expression in the cell bodies and dendrites of neurons in the hippocampus and in the cortex. In the brain detected also in astrocytes and pericytes (at protein level). Isoform 1 and isoform 3 are expressed in brain and peripheral blood mononuclear cells.

It is found in the postsynaptic cell membrane. It localises to the cell projection. The protein resides in the dendritic spine membrane. Its subcellular location is the cell membrane. It carries out the reaction Ca(2+)(in) = Ca(2+)(out). The enzyme catalyses Mg(2+)(in) = Mg(2+)(out). The catalysed reaction is Na(+)(in) = Na(+)(out). It catalyses the reaction K(+)(in) = K(+)(out). With respect to regulation, channel activity is activated via the interaction with PIRT and phosphatidylinositol 4,5-bisphosphate (PIP2). Both PIRT and PIP2 are required to activate channel activity. The channel is sensitized by ATP binding. Repeated stimulation with capsaicin gives rise to progressively smaller responses, due to desensitization. This desensitization is triggered by the influx of calcium ions and is inhibited by elevated ATP levels. Ca(2+) and CALM displace ATP from its binding site and trigger a conformation change that leads to a closed, desensitized channel. Intracellular PIP2 inhibits desensitization. The double-knot toxin (DkTx) from the Chinese earth tiger tarantula activates the channel and traps it in an open conformation. The Scolopendra mutilans RhTx toxin potentiates the heat activation pathway mediated by this channel by binding to the charge-rich outer pore region (in an activated state). Functionally, non-selective calcium permeant cation channel involved in detection of noxious chemical and thermal stimuli. Seems to mediate proton influx and may be involved in intracellular acidosis in nociceptive neurons. Involved in mediation of inflammatory pain and hyperalgesia. Sensitized by a phosphatidylinositol second messenger system activated by receptor tyrosine kinases, which involves PKC isozymes and PCL. Activation by vanilloids, like capsaicin, and temperatures higher than 42 degrees Celsius. Upon activation, exhibits a time- and Ca(2+)-dependent outward rectification, followed by a long-lasting refractory state. Mild extracellular acidic pH (6.5) potentiates channel activation by noxious heat and vanilloids, whereas acidic conditions (pH &lt;6) directly activate the channel. Can be activated by endogenous compounds, including 12-hydroperoxytetraenoic acid and bradykinin. Acts as ionotropic endocannabinoid receptor with central neuromodulatory effects. Triggers a form of long-term depression (TRPV1-LTD) mediated by the endocannabinoid anandamine in the hippocampus and nucleus accumbens by affecting AMPA receptors endocytosis. In terms of biological role, does not display channel activity in response to noxious chemical compounds, such as capsaicin and the vanilloid resiniferatoxin. Channel activity is not elicited by mildly acidic extracellular pH, and only slight channel activity is observed in response to noxiuos heat stimuli. The polypeptide is Transient receptor potential cation channel subfamily V member 1 (Trpv1) (Rattus norvegicus (Rat)).